Consider the following 475-residue polypeptide: Ribulose bisphosphate carboxylase large chain (475 aa).

Lys-14 carries the post-translational modification N6,N6,N6-trimethyllysine. Substrate is bound by residues Asn-123 and Thr-173. Lys-175 acts as the Proton acceptor in catalysis. Lys-177 is a substrate binding site. The Mg(2+) site is built by Lys-201, Asp-203, and Glu-204. At Lys-201 the chain carries N6-carboxylysine. His-294 (proton acceptor) is an active-site residue. Arg-295, His-327, and Ser-379 together coordinate substrate.

This sequence belongs to the RuBisCO large chain family. Type I subfamily. In terms of assembly, heterohexadecamer of 8 large chains and 8 small chains; disulfide-linked. The disulfide link is formed within the large subunit homodimers. Requires Mg(2+) as cofactor. The disulfide bond which can form in the large chain dimeric partners within the hexadecamer appears to be associated with oxidative stress and protein turnover.

It localises to the plastid. It is found in the chloroplast. It catalyses the reaction 2 (2R)-3-phosphoglycerate + 2 H(+) = D-ribulose 1,5-bisphosphate + CO2 + H2O. It carries out the reaction D-ribulose 1,5-bisphosphate + O2 = 2-phosphoglycolate + (2R)-3-phosphoglycerate + 2 H(+). RuBisCO catalyzes two reactions: the carboxylation of D-ribulose 1,5-bisphosphate, the primary event in carbon dioxide fixation, as well as the oxidative fragmentation of the pentose substrate in the photorespiration process. Both reactions occur simultaneously and in competition at the same active site. This is Ribulose bisphosphate carboxylase large chain from Actinidia chinensis (Kiwi).